Consider the following 552-residue polypeptide: Protein FAM234A (552 aa).

At Met1 to Thr48 the chain is on the cytoplasmic side. Residues Ala49 to Ile69 traverse the membrane as a helical; Signal-anchor for type II membrane protein segment. Topologically, residues Pro70 to Ala552 are extracellular. N-linked (GlcNAc...) asparagine glycosylation is found at Asn115, Asn238, and Asn473.

This sequence belongs to the FAM234 family.

It localises to the membrane. The polypeptide is Protein FAM234A (FAM234A) (Bos taurus (Bovine)).